The chain runs to 461 residues: Putative aldehyde dehydrogenase FUS7 (461 aa).

220 to 225 lines the NAD(+) pocket; sequence GSTATG. Active-site residues include Glu-242 and Cys-276.

The protein belongs to the aldehyde dehydrogenase family.

The enzyme catalyses an aldehyde + NAD(+) + H2O = a carboxylate + NADH + 2 H(+). Putative aldehyde dehydrogenase; part of the gene cluster that mediates the biosynthesis of the mycotoxin fusarin C. Within the cluster, FUS1, FUS2, FUS8 and FUS9 are sufficient for fusarin production. The other FUS cluster members are not essential for fusarin C biosynthesis. The polypeptide is Putative aldehyde dehydrogenase FUS7 (Gibberella moniliformis (strain M3125 / FGSC 7600) (Maize ear and stalk rot fungus)).